Here is a 3957-residue protein sequence, read N- to C-terminus: Ankyrin-2 (3957 aa).

The span at 1–14 (MMNEDAAQKSDSGE) shows a compositional bias: basic and acidic residues. The interval 1 to 34 (MMNEDAAQKSDSGEKFNGSSQRRKRPKKSDSNAS) is disordered. ANK repeat units lie at residues 30–62 (DSNA…TCNQ), 63–92 (NGLN…SVDS), 96–125 (KGNT…NINA), 129–158 (NGFT…NQST), 162–191 (DGFT…KGKV), 193–220 (LPAL…NADV), 232–261 (SGFT…AVDF), 265–294 (NGIT…QIDA), 298–327 (DGLT…PLLA), 331–360 (NGLS…PVDD), 364–393 (DYLT…NPNA), 397–426 (NGFT…SIQA), 430–459 (SGLT…SPDV), 463–492 (RGET…LVDA), 496–525 (EEQT…HPDA), 529–558 (NGYT…AHSL), 562–591 (KGFT…AADS), 595–624 (NGLT…SPHA), 628–657 (NGYT…ETNI), 661–690 (QGVT…NIHM), 694–723 (SGLT…DQDA), 727–756 (LGYT…NVNA), 760–789 (NGYT…KPNA), and 793–822 (NGNT…EVTT). 2 positions are modified to phosphoserine: S31 and S34. At Y378 the chain carries Phosphotyrosine. The residue at position 531 (Y531) is a Phosphotyrosine. At S846 the chain carries Phosphoserine. Phosphothreonine is present on T853. S874 bears the Phosphoserine mark. The interval 966 to 1125 (SGFLVSFMVD…ELNEILNGMD (160 aa)) is interaction with SPTBN1. ZU5 domains are found at residues 968-1156 (FLVS…VVSR) and 1158-1304 (KQDS…LIDC). Residues 1289–1423 (VSFTTNVSAR…FVKVRDTTQE (135 aa)) form a UPA domain region. Y1382 is modified (phosphotyrosine). The Death 1 domain maps to 1450–1535 (ITLPIYTKES…SDKAGSIKVK (86 aa)). Residues 1457 to 1486 (KESESDQEQEEEIDMTSEKNDETESTETSV) form a disordered region. Residues S1459, S1461, S1473, S1500, and S1596 each carry the phosphoserine modification. The segment covering 1461 to 1471 (SDQEQEEEIDM) has biased composition (acidic residues). 7 disordered regions span residues 1670 to 2137 (AVGR…TDFS), 2197 to 2411 (ALDG…GLEL), 2430 to 2484 (AVSH…GIFP), 2507 to 2586 (SRLL…TPEE), 2604 to 2852 (EAKQ…SLPH), 2864 to 2904 (DISA…TDRF), and 2923 to 2951 (QITS…ANHT). Composition is skewed to basic and acidic residues over residues 1674 to 1683 (SSEKEGKDIP) and 1711 to 1733 (KQKQ…KGSS). S1732, S1733, and S1736 each carry phosphoserine. Basic and acidic residues predominate over residues 1766–1783 (IKDKVKALQKRVEDEQKG). 7 Repeat A repeats span residues 1806–1817 (HPAASPSLKSER), 1818–1829 (HAPGSPSPKTER), 1830–1841 (HSTLSSSAKTER), 1842–1853 (HPPVSPSSKTEK), 1854–1865 (HSPVSPSAKTER), 1866–1877 (HSPASSSSKTEK), and 1878–1889 (HSPVSPSTKTER). Residues 1806 to 1983 (HPAASPSLKS…PVSPTSKTER (178 aa)) form a repeat-rich region region. 2 positions are modified to phosphoserine: S1855 and S1858. 2 stretches are compositionally biased toward basic and acidic residues: residues 1886–1902 (KTER…ERHP) and 1921–1937 (RTEK…EKRL). Residues 1890–1900 (HSPVSSTKTER) form a Repeat A; approximate repeat. Repeat A repeat units lie at residues 1901-1912 (HPPVSPSGKTDK) and 1913-1924 (RPPVSPSGRTEK). One copy of the Repeat A; approximate repeat lies at 1925–1935 (HPPVSPGRTEK). S1929 is modified (phosphoserine). Repeat A repeat units lie at residues 1936–1947 (RLPVSPSGRTDK), 1948–1959 (HQPVSTAGKTEK), 1960–1971 (HLPVSPSGKTEK), and 1972–1983 (QPPVSPTSKTER). Basic and acidic residues-rich tracts occupy residues 1980–1994 (KTER…RELM), 2003–2034 (PSKH…KEKG), 2075–2093 (VKKE…HKIP), and 2102–2117 (EESH…KMAD). The residue at position 2127 (S2127) is a Phosphoserine. Residues 2128-2137 (PDRKTSTDFS) show a composition bias toward basic and acidic residues. T2239 is modified (phosphothreonine). Polar residues predominate over residues 2240–2251 (PETSPESLSFSP). S2243 carries the phosphoserine modification. Residues 2252 to 2282 (KKSEEQTGETKESTKTETTTEIRSEKEHPTT) are compositionally biased toward basic and acidic residues. T2269 bears the Phosphothreonine mark. At S2275 the chain carries Phosphoserine. The span at 2355–2376 (TFGSSAHKTQTDSEVQESTATS) shows a compositional bias: polar residues. A phosphoserine mark is found at S2405, S2440, S2454, S2516, and S2521. The span at 2523 to 2545 (EQTSLMESSGKSPLSPDTPSSEE) shows a compositional bias: polar residues. Composition is skewed to basic and acidic residues over residues 2576–2586 (NGEKKRFTPEE) and 2604–2619 (EAKQ…KQEE). The residue at position 2583 (T2583) is a Phosphothreonine. Phosphoserine occurs at positions 2679 and 2701. Positions 2696–2705 (PSSMDSNSSP) are enriched in low complexity. Residues 2729–2776 (EPGKSEEEKDSESHLAEDRHAVSTEAEDRSYDKLNRDTDQPKICDGHG) are compositionally biased toward basic and acidic residues. A phosphoserine mark is found at S2781 and S2795. Residues 2781 to 2791 (SPSSSAAPVSS) show a composition bias toward low complexity. Positions 2892 to 2903 (SQDSSITTQTDR) are enriched in polar residues. At S2956 the chain carries Phosphoserine. 3 disordered regions span residues 2987–3016 (NFEG…SSFE), 3069–3099 (LMVD…SEQN), and 3136–3462 (QESR…PTKE). Positions 2998 to 3016 (QQESTLWEMQSDSVSSSFE) are enriched in polar residues. S3075 bears the Phosphoserine mark. Residue T3078 is modified to Phosphothreonine. The span at 3078-3087 (TTPDTTPART) shows a compositional bias: low complexity. Residues 3090 to 3099 (EEGTPTSEQN) are compositionally biased toward polar residues. The span at 3137–3149 (ESREETLSEDVKE) shows a compositional bias: basic and acidic residues. Low complexity predominate over residues 3157–3169 (LPLETSAESLALS). The span at 3175 to 3194 (VDDEADLLPDDVSEEVEEIP) shows a compositional bias: acidic residues. Composition is skewed to polar residues over residues 3198–3212 (AQLN…STET) and 3256–3265 (LDFSTLTRSV). 3 positions are modified to phosphoserine: S3273, S3276, and S3277. Residues 3335-3344 (EENKADEAKP) are compositionally biased toward basic and acidic residues. The segment covering 3357 to 3374 (VEQQLSDLDTSVQKTVAP) has biased composition (polar residues). Phosphoserine occurs at positions 3390 and 3409. Over residues 3409-3423 (SYTETETESRERAEE) the composition is skewed to basic and acidic residues. A compositionally biased stretch (low complexity) spans 3446–3460 (SRSTTSSCRGGTSPT). S3474 carries the phosphoserine modification. The region spanning 3569–3653 (IEERLAYIAD…DIVHLMETNT (85 aa)) is the Death 2 domain. Phosphoserine is present on S3735. 4 positions are modified to phosphothreonine: T3776, T3797, T3803, and T3814. The tract at residues 3777-3858 (PGTETSETQK…VESADNQPET (82 aa)) is disordered. Residue S3823 is modified to Phosphoserine. A compositionally biased stretch (basic and acidic residues) spans 3832–3841 (PSEHREESSP). Position 3909 is a phosphoserine (S3909).

Interacts with RHBG and SPTBN1. Colocalizes with Na/K ATPase, Na/Ca exchanger and SPTBN1. Directly interacts with DMD; this interaction is necessary for DMD localization at the sarcolemma. Interacts with DCTN4; this interaction is required for DCTN4 retention at costameres. Identified in complexes that contain VIM, EZR, AHNAK, BFSP1, BFSP2, ANK2, PLEC, PRX and spectrin. Interacts (via death domain) with RABGAP1L (via Rab-GAP TBC domain). In terms of processing, phosphorylated at multiple sites by different protein kinases and each phosphorylation event regulates the protein's structure and function. In terms of tissue distribution, present in plasma membrane of neurons as well as glial cells throughout the brain. Expressed in fetal brain and in temporal cortex of adult brain. Also expressed in the inner segments of rod photoreceptors in retina.

Its subcellular location is the cytoplasm. The protein resides in the cytoskeleton. It is found in the membrane. The protein localises to the myofibril. It localises to the sarcomere. Its subcellular location is the m line. The protein resides in the apical cell membrane. It is found in the cell membrane. The protein localises to the postsynaptic cell membrane. It localises to the early endosome. Its subcellular location is the recycling endosome. The protein resides in the lysosome. It is found in the mitochondrion. The protein localises to the z line. It localises to the sarcolemma. Its subcellular location is the T-tubule. Its function is as follows. Plays an essential role in the localization and membrane stabilization of ion transporters and ion channels in several cell types, including cardiomyocytes, as well as in striated muscle cells. In skeletal muscle, required for proper localization of DMD and DCTN4 and for the formation and/or stability of a special subset of microtubules associated with costameres and neuromuscular junctions. In cardiomyocytes, required for coordinate assembly of Na/Ca exchanger, SLC8A1/NCX1, Na/K ATPases ATP1A1 and ATP1A2 and inositol 1,4,5-trisphosphate (InsP3) receptors at sarcoplasmic reticulum/sarcolemma sites. Required for expression and targeting of SPTBN1 in neonatal cardiomyocytes and for the regulation of neonatal cardiomyocyte contraction rate. In the inner segment of rod photoreceptors, required for the coordinated expression of the Na/K ATPase, Na/Ca exchanger and beta-2-spectrin (SPTBN1). Plays a role in endocytosis and intracellular protein transport. Associates with phosphatidylinositol 3-phosphate (PI3P)-positive organelles and binds dynactin to promote long-range motility of cells. Recruits RABGAP1L to (PI3P)-positive early endosomes, where RABGAP1L inactivates RAB22A, and promotes polarized trafficking to the leading edge of the migrating cells. Part of the ANK2/RABGAP1L complex which is required for the polarized recycling of fibronectin receptor ITGA5 ITGB1 to the plasma membrane that enables continuous directional cell migration. The chain is Ankyrin-2 (ANK2) from Homo sapiens (Human).